Reading from the N-terminus, the 238-residue chain is Probable RNA/DNA demethylase ALKBH6 (238 aa).

Residues 96-227 form the Fe2OG dioxygenase domain; sequence PANHVLVNQY…RVSLTIRRVP (132 aa). 2-oxoglutarate-binding residues include asparagine 103 and tyrosine 105. Positions 114, 116, and 182 each coordinate Fe cation. Arginine 218 and serine 220 together coordinate 2-oxoglutarate.

Belongs to the alkB family. As to quaternary structure, interacts with VCPKMT. Requires Fe(2+) as cofactor.

The protein localises to the cytoplasm. The protein resides in the nucleus. Its function is as follows. Probable Fe(2+)/2-oxoglutarate-dependent dioxygenase involved in oxidative demethylation of nucleic acids. Binds nucleic acids with a preference for ssDNA or ssRNA to other types of DNAs. May play a role in nucleic acid damage repair. In Mus musculus (Mouse), this protein is Probable RNA/DNA demethylase ALKBH6 (Alkbh6).